Reading from the N-terminus, the 436-residue chain is MGQVLPLVTRQGDRIAIVSGLRTPFARQATAFHGIPAVDLGKMVVGELLARTEIPAEVIEQLVFGQVVQMPEAPNIAREIVLGTGMNVHTDAYSVSRACATSFQAVANVAESLMAGTIRAGIAGGADSSSVLPIGVSKKLARVLVDVNKARTMSQRLKLFSRLRLRDLMPVPPAVAEYSTGLRMGDTAEQMAKTYGITREQQDALAHRSHQRAAQAWSEGKLKEEVMTAFIPPYKQPLVEDNNIRGNSSLADYAKLRPAFDRKHGTVTAANSTPLTDGAAAVILMTESRAKELGLVPLGYLRSYAFTAIDVWQDMLLGPAWSTPLALERAGLTMGDLTLIDMHEAFAAQTLANIQLLGSERFARDVLGRAHATGEVDESKFNVLGGSIAYGHPFAATGARMITQTLYELRRRGGGFGLVTACAAGGLGAAMVLEAE.

Catalysis depends on Cys-99, which acts as the Acyl-thioester intermediate. Residues His-392 and Cys-422 each act as proton acceptor in the active site.

Belongs to the thiolase-like superfamily. Thiolase family. As to quaternary structure, heterotetramer of two alpha chains (FadJ) and two beta chains (FadI).

It is found in the cytoplasm. The enzyme catalyses an acyl-CoA + acetyl-CoA = a 3-oxoacyl-CoA + CoA. It participates in lipid metabolism; fatty acid beta-oxidation. Functionally, catalyzes the final step of fatty acid oxidation in which acetyl-CoA is released and the CoA ester of a fatty acid two carbons shorter is formed. This chain is 3-ketoacyl-CoA thiolase, found in Escherichia coli O81 (strain ED1a).